We begin with the raw amino-acid sequence, 152 residues long: Ribosome maturation factor RimP (152 aa).

This sequence belongs to the RimP family.

The protein resides in the cytoplasm. Functionally, required for maturation of 30S ribosomal subunits. This chain is Ribosome maturation factor RimP, found in Porphyromonas gingivalis (strain ATCC BAA-308 / W83).